Consider the following 185-residue polypeptide: Endoribonuclease YbeY (185 aa).

Positions 142, 146, and 152 each coordinate Zn(2+).

It belongs to the endoribonuclease YbeY family. The cofactor is Zn(2+).

Its subcellular location is the cytoplasm. Functionally, single strand-specific metallo-endoribonuclease involved in late-stage 70S ribosome quality control and in maturation of the 3' terminus of the 16S rRNA. In Parvibaculum lavamentivorans (strain DS-1 / DSM 13023 / NCIMB 13966), this protein is Endoribonuclease YbeY.